We begin with the raw amino-acid sequence, 218 residues long: Thiamine-phosphate synthase (218 aa).

Residues 43-47 (QLRDK) and N75 contribute to the 4-amino-2-methyl-5-(diphosphooxymethyl)pyrimidine site. Residues D76 and D95 each coordinate Mg(2+). Position 114 (S114) interacts with 4-amino-2-methyl-5-(diphosphooxymethyl)pyrimidine. Residue 141–143 (TPT) participates in 2-[(2R,5Z)-2-carboxy-4-methylthiazol-5(2H)-ylidene]ethyl phosphate binding. K144 provides a ligand contact to 4-amino-2-methyl-5-(diphosphooxymethyl)pyrimidine. Residue G172 coordinates 2-[(2R,5Z)-2-carboxy-4-methylthiazol-5(2H)-ylidene]ethyl phosphate.

It belongs to the thiamine-phosphate synthase family. Requires Mg(2+) as cofactor.

The enzyme catalyses 2-[(2R,5Z)-2-carboxy-4-methylthiazol-5(2H)-ylidene]ethyl phosphate + 4-amino-2-methyl-5-(diphosphooxymethyl)pyrimidine + 2 H(+) = thiamine phosphate + CO2 + diphosphate. The catalysed reaction is 2-(2-carboxy-4-methylthiazol-5-yl)ethyl phosphate + 4-amino-2-methyl-5-(diphosphooxymethyl)pyrimidine + 2 H(+) = thiamine phosphate + CO2 + diphosphate. It catalyses the reaction 4-methyl-5-(2-phosphooxyethyl)-thiazole + 4-amino-2-methyl-5-(diphosphooxymethyl)pyrimidine + H(+) = thiamine phosphate + diphosphate. It participates in cofactor biosynthesis; thiamine diphosphate biosynthesis; thiamine phosphate from 4-amino-2-methyl-5-diphosphomethylpyrimidine and 4-methyl-5-(2-phosphoethyl)-thiazole: step 1/1. Condenses 4-methyl-5-(beta-hydroxyethyl)thiazole monophosphate (THZ-P) and 2-methyl-4-amino-5-hydroxymethyl pyrimidine pyrophosphate (HMP-PP) to form thiamine monophosphate (TMP). This Thermobifida fusca (strain YX) protein is Thiamine-phosphate synthase.